Reading from the N-terminus, the 197-residue chain is Ion-translocating oxidoreductase complex subunit B (197 aa).

A hydrophobic region spans residues 1–26 (MSTILIAIIALAALAAVFGAILGFAS). Residues 32 to 90 (EADPIVDQIDSILPQTQCGQCGYPGCRPYAEAIANGDQINKCPPGGQATIEKLADLMGV) form the 4Fe-4S domain. [4Fe-4S] cluster contacts are provided by C49, C52, C57, C73, C114, C117, C120, C124, C144, C147, C150, and C154. 4Fe-4S ferredoxin-type domains follow at residues 105–134 (TVAFIHEDMCIGCTKCIQACPVDAIVGGTK) and 135–164 (ALHTVIKDECTGCDLCVAPCPTDCIEMIPV).

The protein belongs to the 4Fe4S bacterial-type ferredoxin family. RnfB subfamily. The complex is composed of six subunits: RnfA, RnfB, RnfC, RnfD, RnfE and RnfG. Requires [4Fe-4S] cluster as cofactor.

It localises to the cell inner membrane. Its function is as follows. Part of a membrane-bound complex that couples electron transfer with translocation of ions across the membrane. The polypeptide is Ion-translocating oxidoreductase complex subunit B (Vibrio campbellii (strain ATCC BAA-1116)).